A 360-amino-acid chain; its full sequence is Phospho-N-acetylmuramoyl-pentapeptide-transferase (360 aa).

10 consecutive transmembrane segments (helical) span residues 24-44 (RAVM…PWTI), 69-89 (GTPT…TLLW), 92-112 (WANP…ALGF), 133-153 (MVWQ…LAAN), 158-178 (ILIV…GFLV), 199-219 (GLAT…AYAS), 239-259 (VVIF…FNAY), 263-283 (VFMG…VAVI), 288-308 (FVLV…MLQV), and 337-357 (QVVV…LSTL).

The protein belongs to the glycosyltransferase 4 family. MraY subfamily. The cofactor is Mg(2+).

The protein localises to the cell inner membrane. It catalyses the reaction UDP-N-acetyl-alpha-D-muramoyl-L-alanyl-gamma-D-glutamyl-meso-2,6-diaminopimeloyl-D-alanyl-D-alanine + di-trans,octa-cis-undecaprenyl phosphate = di-trans,octa-cis-undecaprenyl diphospho-N-acetyl-alpha-D-muramoyl-L-alanyl-D-glutamyl-meso-2,6-diaminopimeloyl-D-alanyl-D-alanine + UMP. Its pathway is cell wall biogenesis; peptidoglycan biosynthesis. Catalyzes the initial step of the lipid cycle reactions in the biosynthesis of the cell wall peptidoglycan: transfers peptidoglycan precursor phospho-MurNAc-pentapeptide from UDP-MurNAc-pentapeptide onto the lipid carrier undecaprenyl phosphate, yielding undecaprenyl-pyrophosphoryl-MurNAc-pentapeptide, known as lipid I. This chain is Phospho-N-acetylmuramoyl-pentapeptide-transferase, found in Neisseria meningitidis serogroup C / serotype 2a (strain ATCC 700532 / DSM 15464 / FAM18).